A 164-amino-acid polypeptide reads, in one-letter code: FMN reductase (NADH) RutF (164 aa).

Belongs to the non-flavoprotein flavin reductase family. RutF subfamily.

It catalyses the reaction FMNH2 + NAD(+) = FMN + NADH + 2 H(+). Catalyzes the reduction of FMN to FMNH2 which is used to reduce pyrimidine by RutA via the Rut pathway. This is FMN reductase (NADH) RutF from Escherichia coli O45:K1 (strain S88 / ExPEC).